Consider the following 454-residue polypeptide: GA-binding protein alpha chain (454 aa).

A PNT domain is found at 168 to 251; it reads AALEGYRKEQ…SHLELLRKYV (84 aa). The tract at residues 295–316 is disordered; the sequence is KVQRSPRISGEDRSSPGNRTGN. At Ser-303 the chain carries Phosphoserine. Positions 320 to 400 form a DNA-binding region, ETS; it reads IQLWQFLLEL…QGKRFVYKFV (81 aa).

It belongs to the ETS family. As to quaternary structure, heterotetramer of two alpha and two beta subunits. As to expression, ubiquitous.

The protein resides in the nucleus. In terms of biological role, transcription factor capable of interacting with purine rich repeats (GA repeats). Positively regulates transcription of transcriptional repressor Rhit/Zpf13. The sequence is that of GA-binding protein alpha chain (Gabpa) from Mus musculus (Mouse).